We begin with the raw amino-acid sequence, 586 residues long: CTP synthase 2 (586 aa).

In terms of domain architecture, Glutamine amidotransferase type-1 spans 300–554; that stretch reads SIALVGKYTK…LAATGTLNTH (255 aa). Active-site for GATase activity residues include cysteine 399, histidine 526, and glutamate 528. Phosphoserine occurs at positions 568, 571, and 574.

This sequence belongs to the CTP synthase family.

It catalyses the reaction UTP + L-glutamine + ATP + H2O = CTP + L-glutamate + ADP + phosphate + 2 H(+). It participates in pyrimidine metabolism; CTP biosynthesis via de novo pathway; CTP from UDP: step 2/2. Its function is as follows. Catalyzes the ATP-dependent amination of UTP to CTP with either L-glutamine or ammonia as the source of nitrogen. Constitutes the rate-limiting enzyme in the synthesis of cytosine nucleotides. In Rattus norvegicus (Rat), this protein is CTP synthase 2 (Ctps2).